A 402-amino-acid chain; its full sequence is 1-deoxy-D-xylulose 5-phosphate reductoisomerase (402 aa).

6 residues coordinate NADPH: T10, G11, S12, I13, N38, and N124. Residue K125 coordinates 1-deoxy-D-xylulose 5-phosphate. NADPH is bound at residue E126. Residue D150 participates in Mn(2+) binding. S151, E152, S186, and H209 together coordinate 1-deoxy-D-xylulose 5-phosphate. Residue E152 participates in Mn(2+) binding. G215 contacts NADPH. Residues S222, N227, K228, and E231 each coordinate 1-deoxy-D-xylulose 5-phosphate. E231 serves as a coordination point for Mn(2+).

It belongs to the DXR family. Mg(2+) serves as cofactor. Requires Mn(2+) as cofactor.

The enzyme catalyses 2-C-methyl-D-erythritol 4-phosphate + NADP(+) = 1-deoxy-D-xylulose 5-phosphate + NADPH + H(+). The protein operates within isoprenoid biosynthesis; isopentenyl diphosphate biosynthesis via DXP pathway; isopentenyl diphosphate from 1-deoxy-D-xylulose 5-phosphate: step 1/6. In terms of biological role, catalyzes the NADPH-dependent rearrangement and reduction of 1-deoxy-D-xylulose-5-phosphate (DXP) to 2-C-methyl-D-erythritol 4-phosphate (MEP). In Vibrio vulnificus (strain YJ016), this protein is 1-deoxy-D-xylulose 5-phosphate reductoisomerase.